The following is a 47-amino-acid chain: MKKFRWVVLGIVVVVCLLLWAQVFNIMCNQDVQFFSGICAINKFIPW.

Residues 6-26 form a helical membrane-spanning segment; it reads WVVLGIVVVVCLLLWAQVFNI.

Belongs to the MgrB family. May form homooligomers. Probably interacts with the periplasmic domain of PhoQ.

It localises to the cell inner membrane. In terms of biological role, phoP-regulated transcription is redox-sensitive, being activated when the periplasm becomes more reducing. MgrB acts between DsbA/DsbB and PhoP/PhoQ in this pathway. Represses PhoP/PhoQ signaling, possibly by binding to the periplasmic domain of PhoQ, altering its activity and that of downstream effector PhoP. The sequence is that of PhoP/PhoQ regulator MgrB from Salmonella gallinarum (strain 287/91 / NCTC 13346).